The primary structure comprises 779 residues: Beta-galactosidase 15 (779 aa).

An N-terminal signal peptide occupies residues 1–19; it reads MVSLSFILCCVLVSSCAYA. Asparagine 148 is a glycosylation site (N-linked (GlcNAc...) asparagine). Catalysis depends on glutamate 178, which acts as the Proton donor. Glutamate 247 acts as the Nucleophile in catalysis. Asparagine 248, asparagine 345, asparagine 374, asparagine 489, asparagine 495, and asparagine 555 each carry an N-linked (GlcNAc...) asparagine glycan. In terms of domain architecture, SUEL-type lectin spans 694–779; that stretch reads VYEKNVLELS…AKRLAVEAIC (86 aa).

Belongs to the glycosyl hydrolase 35 family. Ubiquitous, with higher levels in roots and siliques.

The protein resides in the secreted. It is found in the extracellular space. The protein localises to the apoplast. The catalysed reaction is Hydrolysis of terminal non-reducing beta-D-galactose residues in beta-D-galactosides.. The sequence is that of Beta-galactosidase 15 (BGAL15) from Arabidopsis thaliana (Mouse-ear cress).